We begin with the raw amino-acid sequence, 101 residues long: uncharacterized protein (101 aa).

This is an uncharacterized protein from Haemophilus influenzae (strain ATCC 51907 / DSM 11121 / KW20 / Rd).